A 465-amino-acid chain; its full sequence is MKVYNTLTNKKEEFLTLVPGEVKMYVCGPTVYNFFHIGNARTFVVFDTIRRYLEYRGYKVKFIQNFTDIDDKMIKRANEEGSTVKELGDRFIKEYYKDADDLNIERATKNPRATEFMEEIIKFVSDLIEKGYAYEIDGDVYFSTKKFNSYGKLSGQNLEELQLGARINIDERKKDPMDFAIWKSQKPGEPAWESPWGMGRPGWHIECSCMAYNLLGETIDIHAGGSDLSFPHHENEIAQSEARTGKQFAKYWLHSAFVNVNNQKMSKSLNNFFTAREILEKYDADVLRMFMLSGHYRTQINFSMELLDSTKAALDRLYNSINNLENLLDEVKNEELRDEELEYKNELQKYKEKYIEKMDDDFNTADAISVIFDLIRDVNTNVTIESSKELVKYTLDLIRELGNPLGILQESTKASLEEEIEKLIEERQKARKEKNWALADKIRDNLKERGIVLEDTPQGVRWKQI.

Zn(2+) is bound at residue C27. A 'HIGH' region motif is present at residues 29 to 39; sequence PTVYNFFHIGN. Positions 207, 232, and 236 each coordinate Zn(2+). Positions 264-268 match the 'KMSKS' region motif; it reads KMSKS. K267 serves as a coordination point for ATP.

Belongs to the class-I aminoacyl-tRNA synthetase family. In terms of assembly, monomer. Zn(2+) is required as a cofactor.

It is found in the cytoplasm. It catalyses the reaction tRNA(Cys) + L-cysteine + ATP = L-cysteinyl-tRNA(Cys) + AMP + diphosphate. This is Cysteine--tRNA ligase from Clostridium botulinum (strain Langeland / NCTC 10281 / Type F).